Consider the following 362-residue polypeptide: Phosphoserine aminotransferase (362 aa).

R43 is an L-glutamate binding site. Pyridoxal 5'-phosphate contacts are provided by residues 77 to 78 (AS), W103, T153, D173, and Q196. At K197 the chain carries N6-(pyridoxal phosphate)lysine. 238 to 239 (NT) is a binding site for pyridoxal 5'-phosphate.

This sequence belongs to the class-V pyridoxal-phosphate-dependent aminotransferase family. SerC subfamily. In terms of assembly, homodimer. Requires pyridoxal 5'-phosphate as cofactor.

The protein resides in the cytoplasm. It catalyses the reaction O-phospho-L-serine + 2-oxoglutarate = 3-phosphooxypyruvate + L-glutamate. The catalysed reaction is 4-(phosphooxy)-L-threonine + 2-oxoglutarate = (R)-3-hydroxy-2-oxo-4-phosphooxybutanoate + L-glutamate. The protein operates within amino-acid biosynthesis; L-serine biosynthesis; L-serine from 3-phospho-D-glycerate: step 2/3. Functionally, catalyzes the reversible conversion of 3-phosphohydroxypyruvate to phosphoserine and of 3-hydroxy-2-oxo-4-phosphonooxybutanoate to phosphohydroxythreonine. The chain is Phosphoserine aminotransferase from Lysinibacillus sphaericus (strain C3-41).